The primary structure comprises 332 residues: Oxygen-dependent coproporphyrinogen-III oxidase (332 aa).

Serine 119 is a binding site for coproporphyrinogen III. Histidine 133 serves as the catalytic Proton donor. Residues 135-137 (NVR) and 284-285 (GR) contribute to the coproporphyrinogen III site.

This sequence belongs to the aerobic coproporphyrinogen-III oxidase family. As to quaternary structure, homodimer.

The enzyme catalyses coproporphyrinogen III + O2 + 2 H(+) = protoporphyrinogen IX + 2 CO2 + 2 H2O. The protein operates within porphyrin-containing compound metabolism; protoporphyrin-IX biosynthesis; protoporphyrinogen-IX from coproporphyrinogen-III (O2 route): step 1/1. Functionally, involved in the heme biosynthesis. Catalyzes the aerobic oxidative decarboxylation of propionate groups of rings A and B of coproporphyrinogen-III to yield the vinyl groups in protoporphyrinogen-IX. In Dictyostelium discoideum (Social amoeba), this protein is Oxygen-dependent coproporphyrinogen-III oxidase (cpox).